Consider the following 279-residue polypeptide: Urease accessory protein UreD (279 aa).

It belongs to the UreD family. As to quaternary structure, ureD, UreF and UreG form a complex that acts as a GTP-hydrolysis-dependent molecular chaperone, activating the urease apoprotein by helping to assemble the nickel containing metallocenter of UreC. The UreE protein probably delivers the nickel.

It localises to the cytoplasm. Functionally, required for maturation of urease via the functional incorporation of the urease nickel metallocenter. This chain is Urease accessory protein UreD, found in Trichodesmium erythraeum (strain IMS101).